The chain runs to 172 residues: Large ribosomal subunit protein uL10 (172 aa).

It belongs to the universal ribosomal protein uL10 family. In terms of assembly, part of the ribosomal stalk of the 50S ribosomal subunit. The N-terminus interacts with L11 and the large rRNA to form the base of the stalk. The C-terminus forms an elongated spine to which L12 dimers bind in a sequential fashion forming a multimeric L10(L12)X complex.

Its function is as follows. Forms part of the ribosomal stalk, playing a central role in the interaction of the ribosome with GTP-bound translation factors. In Caulobacter sp. (strain K31), this protein is Large ribosomal subunit protein uL10.